The primary structure comprises 1153 residues: Cingulin (1153 aa).

The head stretch occupies residues 1-342 (MAEPRGPVDH…LVMTTGSAKV (342 aa)). A disordered region spans residues 17 to 37 (ITEPAGDAQMRTGRRPAKDAR). The ZIM motif lies at 38–52 (ANTYGVAVRVQGIAG). Positions 44 to 57 (AVRVQGIAGQPFVV) are interaction with TJP1/ZO1. Residues Ser-86, Ser-126, Ser-128, Ser-131, Ser-146, Ser-205, Ser-208, and Ser-324 each carry the phosphoserine modification. 2 disordered regions span residues 131–151 (SLLGPAPLGPGHRSTSLLELG) and 177–253 (DRHQ…SRAR). Over residues 207-220 (DSRHLRDPPEDRRS) the composition is skewed to basic and acidic residues. Residues 343 to 1110 (LAGQGELAQK…ALEKDSWRKA (768 aa)) adopt a coiled-coil conformation. Residue Lys-562 is modified to N6-acetyllysine. 3 disordered regions span residues 755–796 (AQRG…QKRL), 823–861 (QSQLEDYKEKSRREVADAQRQAKEWASEAEKSSGGLSRL), and 1110–1131 (AARSAAESSLQQEGLSSDEEFD). 2 stretches are compositionally biased toward basic and acidic residues: residues 772 to 796 (ALEEEGKQREALRRGKAELEEQKRL) and 827 to 853 (EDYKEKSRREVADAQRQAKEWASEAEK). A tail region spans residues 1111-1153 (ARSAAESSLQQEGLSSDEEFDGVYNPNSIASLLTESGLQTSSC). Positions 1115–1124 (AESSLQQEGL) are enriched in polar residues. Residues Ser-1125 and Ser-1126 each carry the phosphoserine modification.

The protein belongs to the cingulin family. In terms of assembly, homodimer. Interacts with TJP1/ZO1 and SPEF1.

Its subcellular location is the cell junction. The protein resides in the tight junction. In terms of biological role, probably plays a role in the formation and regulation of the tight junction (TJ) paracellular permeability barrier. The protein is Cingulin of Sorex araneus (Eurasian common shrew).